Reading from the N-terminus, the 374-residue chain is tRNA-specific 2-thiouridylase MnmA (374 aa).

ATP is bound by residues 15–22 (GMSGGVDS) and M41. The tract at residues 101-103 (NPD) is interaction with target base in tRNA. C106 serves as the catalytic Nucleophile. C106 and C203 form a disulfide bridge. G130 serves as a coordination point for ATP. Residues 153-155 (KDQ) are interaction with tRNA. C203 serves as the catalytic Cysteine persulfide intermediate. The interval 311–312 (RY) is interaction with tRNA.

This sequence belongs to the MnmA/TRMU family.

The protein localises to the cytoplasm. It catalyses the reaction S-sulfanyl-L-cysteinyl-[protein] + uridine(34) in tRNA + AH2 + ATP = 2-thiouridine(34) in tRNA + L-cysteinyl-[protein] + A + AMP + diphosphate + H(+). In terms of biological role, catalyzes the 2-thiolation of uridine at the wobble position (U34) of tRNA, leading to the formation of s(2)U34. This chain is tRNA-specific 2-thiouridylase MnmA, found in Lysinibacillus sphaericus (strain C3-41).